A 416-amino-acid polypeptide reads, in one-letter code: E3 ubiquitin-protein ligase makorin-2 (416 aa).

2 consecutive C3H1-type zinc fingers follow at residues 2–29 (STKQ…HDLA) and 31–58 (SKPS…HTRP). Basic and acidic residues predominate over residues 113–122 (NLSGMAERKT). The segment at 113–142 (NLSGMAERKTQPSMVSNPGSCSDPQPSPEM) is disordered. Residues 123–136 (QPSMVSNPGSCSDP) show a composition bias toward polar residues. S139 is modified (phosphoserine). The segment at 165–192 (SNEQQLCPYAAAGECRFGDACVYLHGEV) adopts a C3H1-type 3 zinc-finger fold. The makorin-type Cys-His stretch occupies residues 193–222 (CEICRLQVLHPFDPEQRKAHEKICMLTFEH). The segment at 238–292 (CSICMEVILEKASASERRFGILSNCNHTYCLSCIRQWRCAKQFENPIIKSCPECR) adopts an RING-type zinc-finger fold. The C3H1-type 4 zinc-finger motif lies at 321-350 (GMGKKACKYFEQGKGTCPFGSKCLYRHAYP).

Interacts with PDLIM2 (via LIM zinc-binding domain). Interacts with RELA. Expressed in sperm, with significantly reduced expression in sperm of patients with oligoasthenoteratozoospermia (at protein level). Widely expressed with expression in testis, ovary, small intestine, colon, peripheral blood leukocytes, fetal liver, bone marrow, thymus, lymph node and spleen.

The protein resides in the cytoplasm. Its subcellular location is the nucleus. The catalysed reaction is S-ubiquitinyl-[E2 ubiquitin-conjugating enzyme]-L-cysteine + [acceptor protein]-L-lysine = [E2 ubiquitin-conjugating enzyme]-L-cysteine + N(6)-ubiquitinyl-[acceptor protein]-L-lysine.. Its pathway is protein modification; protein ubiquitination. Functionally, E3 ubiquitin ligase catalyzing the covalent attachment of ubiquitin moieties onto substrate proteins. Promotes the polyubiquitination and proteasome-dependent degradation of RELA/p65, thereby suppressing RELA-mediated NF-kappaB transactivation and negatively regulating inflammatory responses. Plays a role in the regulation of spermiation and in male fertility. This chain is E3 ubiquitin-protein ligase makorin-2 (MKRN2), found in Homo sapiens (Human).